The sequence spans 251 residues: 3-deoxy-manno-octulosonate cytidylyltransferase (251 aa).

The protein belongs to the KdsB family.

It localises to the cytoplasm. The catalysed reaction is 3-deoxy-alpha-D-manno-oct-2-ulosonate + CTP = CMP-3-deoxy-beta-D-manno-octulosonate + diphosphate. The protein operates within nucleotide-sugar biosynthesis; CMP-3-deoxy-D-manno-octulosonate biosynthesis; CMP-3-deoxy-D-manno-octulosonate from 3-deoxy-D-manno-octulosonate and CTP: step 1/1. It participates in bacterial outer membrane biogenesis; lipopolysaccharide biosynthesis. Activates KDO (a required 8-carbon sugar) for incorporation into bacterial lipopolysaccharide in Gram-negative bacteria. This Brucella canis (strain ATCC 23365 / NCTC 10854 / RM-666) protein is 3-deoxy-manno-octulosonate cytidylyltransferase.